We begin with the raw amino-acid sequence, 337 residues long: Diacylglycerol O-acyltransferase 2-like protein 6 (337 aa).

A run of 2 helical transmembrane segments spans residues 22 to 42 (IPVYIFLGAIPILLIPYFLLF) and 102 to 122 (YIIANHPHGILSFGVFINFAT).

Belongs to the diacylglycerol acyltransferase family. Expressed in all tissues tested except pancreas.

The protein resides in the endoplasmic reticulum membrane. The enzyme catalyses 1,2-di-(9Z-octadecenoyl)-sn-glycerol + (9Z)-octadecenoyl-CoA = 1,2,3-tri-(9Z-octadecenoyl)-glycerol + CoA. The catalysed reaction is 1-O-(9Z-octadecenyl)-glycerol + (9Z)-octadecenoyl-CoA = 1-O-(9Z-octadecyl)-3-(9Z-octadecenoyl)-glycerol + CoA. It carries out the reaction 1-(9Z-octadecenoyl)-glycerol + (9Z)-octadecenoyl-CoA = 1,2-di-(9Z-octadecenoyl)-glycerol + CoA. Diglyceride acyltransferase that uses fatty acyl-CoA as substrate. Particularly active with oleate as a substrate. Has no wax synthase activity to produce wax esters. Able to use 1-monoalkylglycerol (1-MAkG) as an acyl acceptor for the synthesis of monoalkyl-monoacylglycerol (MAMAG). The chain is Diacylglycerol O-acyltransferase 2-like protein 6 from Homo sapiens (Human).